The chain runs to 93 residues: MADITDIKTIIYTEKTLGLQEQGVVVIQTSPKVTKNGLKEVLKEYFGVTPLRINSLRITGKVKRFRGKVGQRDEIKKFYVKLPEGVSLENTEA.

It belongs to the universal ribosomal protein uL23 family. Part of the 50S ribosomal subunit. Contacts protein L29, and trigger factor when it is bound to the ribosome.

One of the early assembly proteins it binds 23S rRNA. One of the proteins that surrounds the polypeptide exit tunnel on the outside of the ribosome. Forms the main docking site for trigger factor binding to the ribosome. The sequence is that of Large ribosomal subunit protein uL23 from Campylobacter curvus (strain 525.92).